Consider the following 417-residue polypeptide: Neuropeptide FF receptor 2 (417 aa).

The Extracellular segment spans residues 1 to 45; sequence MSEKWDSNSSESWNHIWSGNDTQHHWYSDINITYVNYYLHQPQVA. 3 N-linked (GlcNAc...) asparagine glycosylation sites follow: N8, N20, and N31. A helical membrane pass occupies residues 46–66; the sequence is AVFISSYLLIFVLCMVGNTVV. The Cytoplasmic portion of the chain corresponds to 67-82; sequence CFIVIRNRHMHTVTNF. The helical transmembrane segment at 83–103 threads the bilayer; the sequence is FILNLAISDLLVGIFCMPITL. Residues 104-119 are Extracellular-facing; sequence LDNIIAGWPFGSSMCK. A disulfide bridge connects residues C118 and C206. The helical transmembrane segment at 120–140 threads the bilayer; that stretch reads ISGLVQGISVAASVFTLVAIA. The Cytoplasmic segment spans residues 141-160; the sequence is VDRFRCVVYPFKPKLTVKTA. A helical transmembrane segment spans residues 161 to 181; sequence FVTIVIIWGLAIAIMTPSAIM. At 182–217 the chain is on the extracellular side; it reads LHVQEEKYYRVRLSSHNKTSTVYWCREDWPRHEMRR. Residue N198 is glycosylated (N-linked (GlcNAc...) asparagine). A helical membrane pass occupies residues 218-238; it reads IYTTVLFATIYLAPLSLIVIM. The Cytoplasmic segment spans residues 239-274; the sequence is YARIGASLFKTAAHCTGKQRPVQWHVSKKKQKVIKM. A helical transmembrane segment spans residues 275–295; that stretch reads LLTVALLFILSWLPLWTLMML. Residues 296 to 310 lie on the Extracellular side of the membrane; that stretch reads SDYTDLSPNKLRIIN. The chain crosses the membrane as a helical span at residues 311-331; sequence IYIYPFAHWLAFCNSSVNPII. Topologically, residues 332–417 are cytoplasmic; the sequence is YGFFNENFRN…MGEATNSTVA (86 aa). A disordered region spans residues 382–401; the sequence is SQNPGGENLGCGKSADNPTQ.

This sequence belongs to the G-protein coupled receptor 1 family.

The protein resides in the cell membrane. In terms of biological role, receptor for NPAF (A-18-F-amide) and NPFF (F-8-F-amide) neuropeptides, also known as morphine-modulating peptides. Can also be activated by a variety of naturally occurring or synthetic FMRF-amide like ligands. This receptor mediates its action by association with G proteins that activate a phosphatidylinositol-calcium second messenger system. This chain is Neuropeptide FF receptor 2 (Npffr2), found in Mus musculus (Mouse).